The primary structure comprises 227 residues: Ribonuclease 3 (227 aa).

Positions 6 to 128 constitute an RNase III domain; sequence ASDYQQRIGY…VIAAIYLDAD (123 aa). Glu41 serves as a coordination point for Mg(2+). The active site involves Asp45. 2 residues coordinate Mg(2+): Asp114 and Glu117. Glu117 is a catalytic residue. Residues 155–225 enclose the DRBM domain; it reads DPKTRLQEWL…ASHAINQLDS (71 aa). Residues 203-212 are compositionally biased toward basic and acidic residues; that stretch reads GEGSSRRLAE. Residues 203 to 227 form a disordered region; sequence GEGSSRRLAEQDAASHAINQLDSNK.

The protein belongs to the ribonuclease III family. In terms of assembly, homodimer. Mg(2+) is required as a cofactor.

The protein localises to the cytoplasm. The catalysed reaction is Endonucleolytic cleavage to 5'-phosphomonoester.. Its function is as follows. Digests double-stranded RNA. Involved in the processing of primary rRNA transcript to yield the immediate precursors to the large and small rRNAs (23S and 16S). Processes some mRNAs, and tRNAs when they are encoded in the rRNA operon. Processes pre-crRNA and tracrRNA of type II CRISPR loci if present in the organism. The protein is Ribonuclease 3 of Xylella fastidiosa (strain M12).